We begin with the raw amino-acid sequence, 325 residues long: Elongation factor P--(R)-beta-lysine ligase (325 aa).

Substrate is bound at residue Ser-76–Glu-78. Residues Arg-100–Glu-102 and Asn-109 contribute to the ATP site. Substrate is bound at residue Tyr-118. Glu-244 to Leu-245 contacts ATP. Glu-251 provides a ligand contact to substrate. ATP is bound at residue Gly-300.

The protein belongs to the class-II aminoacyl-tRNA synthetase family. EpmA subfamily. As to quaternary structure, homodimer.

It catalyses the reaction D-beta-lysine + L-lysyl-[protein] + ATP = N(6)-((3R)-3,6-diaminohexanoyl)-L-lysyl-[protein] + AMP + diphosphate + H(+). In terms of biological role, with EpmB is involved in the beta-lysylation step of the post-translational modification of translation elongation factor P (EF-P). Catalyzes the ATP-dependent activation of (R)-beta-lysine produced by EpmB, forming a lysyl-adenylate, from which the beta-lysyl moiety is then transferred to the epsilon-amino group of a conserved specific lysine residue in EF-P. The polypeptide is Elongation factor P--(R)-beta-lysine ligase (Yersinia pseudotuberculosis serotype O:1b (strain IP 31758)).